We begin with the raw amino-acid sequence, 239 residues long: Elongation factor Ts (239 aa).

Residues 82–85 (TDFV) are involved in Mg(2+) ion dislocation from EF-Tu. Residues 213-239 (AAQTKPKAEEKPAAKKATSKKKKGKKK) are disordered. A compositionally biased stretch (basic residues) spans 229-239 (ATSKKKKGKKK).

This sequence belongs to the EF-Ts family.

The protein resides in the cytoplasm. In terms of biological role, associates with the EF-Tu.GDP complex and induces the exchange of GDP to GTP. It remains bound to the aminoacyl-tRNA.EF-Tu.GTP complex up to the GTP hydrolysis stage on the ribosome. In Acaryochloris marina (strain MBIC 11017), this protein is Elongation factor Ts.